A 395-amino-acid polypeptide reads, in one-letter code: Testis-expressed protein 44 (395 aa).

4 disordered regions span residues 1-32, 46-100, 133-215, and 235-258; these read MALP…PLTA, WQDI…LQVS, KMSQ…SDES, and FPPP…GRRP. A compositionally biased stretch (polar residues) spans 53–65; it reads SFKTATPRAISTS. Residues 87–98 are compositionally biased toward low complexity; the sequence is PLLPSQNPSPLQ. Basic and acidic residues predominate over residues 192–207; sequence SAEEKAEHPKAPHPEA. Serine 333 bears the Phosphoserine mark.

As to expression, testis. Detected in germ cells at all stages of the seminiferous epithelium, strong expression in elongating spermatids (at protein level).

It is found in the cytoplasm. The protein is Testis-expressed protein 44 of Homo sapiens (Human).